A 124-amino-acid polypeptide reads, in one-letter code: Large-conductance mechanosensitive channel (124 aa).

Helical transmembrane passes span 14–34 (VIDLAVGVIIGAAFTAIVQSL), 37–57 (NLINPLIGIFVGKIDLSNLVF), and 67–87 (GSFINSVINFLIISFVVFLIV).

Belongs to the MscL family. As to quaternary structure, homopentamer.

It is found in the cell membrane. Functionally, channel that opens in response to stretch forces in the membrane lipid bilayer. May participate in the regulation of osmotic pressure changes within the cell. This Lactobacillus acidophilus (strain ATCC 700396 / NCK56 / N2 / NCFM) protein is Large-conductance mechanosensitive channel.